The chain runs to 362 residues: Homeobox protein Nkx-2.3 (362 aa).

Disordered regions lie at residues 126–149 (EAAGDCKTSEDGERPKPRSRRKPR) and 203–222 (QRQDKSLELGTHAPPPPPRR). Basic and acidic residues predominate over residues 132-141 (KTSEDGERPK). Positions 145 to 204 (RRKPRVLFSQAQVFELERRFKQQRYLSAPEREHLASSLKLTSTQVKIWFQNRRYKCKRQR) form a DNA-binding region, homeobox.

It belongs to the NK-2 homeobox family. Expressed in spleen and intestine. Also expressed in salivary gland and tongue.

It localises to the nucleus. Transcriptional regulator essential for normal development and functions of the small intestine and spleen. Activates directly MADCAM1 expression. Required for homing of lymphocytes in spleen and mucosa-associated lymphoid tissue. May have a role during pharyngeal organogenesis. The chain is Homeobox protein Nkx-2.3 (Nkx2-3) from Mus musculus (Mouse).